The primary structure comprises 63 residues: Cysteine-rich peptide clone 2 (63 aa).

A signal peptide spans 1-23 (MHFSGVVLILLSMTLVNFVFVET). Cystine bridges form between Cys33–Cys53, Cys38–Cys58, and Cys42–Cys60.

As to expression, expressed by the venom gland.

Its subcellular location is the secreted. This chain is Cysteine-rich peptide clone 2, found in Tityus costatus (Brazilian scorpion).